Here is a 180-residue protein sequence, read N- to C-terminus: Putative adenylate kinase (180 aa).

Residues Gly-10, Gly-12, Lys-13, Thr-14, and Thr-15 each coordinate ATP. The tract at residues Asn-30 to Val-50 is NMP. Residues Glu-99–Glu-109 form an LID region. Residues Arg-100 and Lys-138 each contribute to the ATP site.

This sequence belongs to the adenylate kinase family. AK6 subfamily. As to quaternary structure, interacts with uS11. Not a structural component of 40S pre-ribosomes, but transiently interacts with them by binding to uS11.

It catalyses the reaction AMP + ATP = 2 ADP. The enzyme catalyses ATP + H2O = ADP + phosphate + H(+). Functionally, broad-specificity nucleoside monophosphate (NMP) kinase that catalyzes the reversible transfer of the terminal phosphate group between nucleoside triphosphates and monophosphates. Also has ATPase activity. Involved in the late maturation steps of the 30S ribosomal particles, specifically 16S rRNA maturation. While NMP activity is not required for ribosome maturation, ATPase activity is. Associates transiently with small ribosomal subunit protein uS11. ATP hydrolysis breaks the interaction with uS11. May temporarily remove uS11 from the ribosome to enable a conformational change of the ribosomal RNA that is needed for the final maturation step of the small ribosomal subunit. The polypeptide is Putative adenylate kinase (Pyrococcus furiosus (strain ATCC 43587 / DSM 3638 / JCM 8422 / Vc1)).